The chain runs to 429 residues: Glutamate-1-semialdehyde 2,1-aminomutase 2 (429 aa).

At K268 the chain carries N6-(pyridoxal phosphate)lysine.

The protein belongs to the class-III pyridoxal-phosphate-dependent aminotransferase family. HemL subfamily. In terms of assembly, homodimer. It depends on pyridoxal 5'-phosphate as a cofactor.

It localises to the cytoplasm. It catalyses the reaction (S)-4-amino-5-oxopentanoate = 5-aminolevulinate. Its pathway is porphyrin-containing compound metabolism; protoporphyrin-IX biosynthesis; 5-aminolevulinate from L-glutamyl-tRNA(Glu): step 2/2. The polypeptide is Glutamate-1-semialdehyde 2,1-aminomutase 2 (Staphylococcus aureus (strain USA300)).